Reading from the N-terminus, the 248-residue chain is 4-hydroxy-tetrahydrodipicolinate reductase (248 aa).

NAD(+)-binding positions include 9-14 (GAKGRV), 77-79 (GTT), and 104-107 (APNF). The active-site Proton donor/acceptor is His134. His135 is a binding site for (S)-2,3,4,5-tetrahydrodipicolinate. The Proton donor role is filled by Lys138. 144–145 (GT) serves as a coordination point for (S)-2,3,4,5-tetrahydrodipicolinate.

This sequence belongs to the DapB family.

It is found in the cytoplasm. The catalysed reaction is (S)-2,3,4,5-tetrahydrodipicolinate + NAD(+) + H2O = (2S,4S)-4-hydroxy-2,3,4,5-tetrahydrodipicolinate + NADH + H(+). It carries out the reaction (S)-2,3,4,5-tetrahydrodipicolinate + NADP(+) + H2O = (2S,4S)-4-hydroxy-2,3,4,5-tetrahydrodipicolinate + NADPH + H(+). The protein operates within amino-acid biosynthesis; L-lysine biosynthesis via DAP pathway; (S)-tetrahydrodipicolinate from L-aspartate: step 4/4. Its function is as follows. Catalyzes the conversion of 4-hydroxy-tetrahydrodipicolinate (HTPA) to tetrahydrodipicolinate. The sequence is that of 4-hydroxy-tetrahydrodipicolinate reductase from Corynebacterium aurimucosum (strain ATCC 700975 / DSM 44827 / CIP 107346 / CN-1) (Corynebacterium nigricans).